Consider the following 154-residue polypeptide: 6,7-dimethyl-8-ribityllumazine synthase (154 aa).

Residues Phe23, 57–59 (AYE), and 81–83 (AVI) each bind 5-amino-6-(D-ribitylamino)uracil. 86–87 (AT) lines the (2S)-2-hydroxy-3-oxobutyl phosphate pocket. His89 serves as the catalytic Proton donor. 5-amino-6-(D-ribitylamino)uracil is bound at residue Phe114. Arg128 contacts (2S)-2-hydroxy-3-oxobutyl phosphate.

Belongs to the DMRL synthase family.

It catalyses the reaction (2S)-2-hydroxy-3-oxobutyl phosphate + 5-amino-6-(D-ribitylamino)uracil = 6,7-dimethyl-8-(1-D-ribityl)lumazine + phosphate + 2 H2O + H(+). Its pathway is cofactor biosynthesis; riboflavin biosynthesis; riboflavin from 2-hydroxy-3-oxobutyl phosphate and 5-amino-6-(D-ribitylamino)uracil: step 1/2. Functionally, catalyzes the formation of 6,7-dimethyl-8-ribityllumazine by condensation of 5-amino-6-(D-ribitylamino)uracil with 3,4-dihydroxy-2-butanone 4-phosphate. This is the penultimate step in the biosynthesis of riboflavin. In Desulforamulus reducens (strain ATCC BAA-1160 / DSM 100696 / MI-1) (Desulfotomaculum reducens), this protein is 6,7-dimethyl-8-ribityllumazine synthase.